The chain runs to 619 residues: Phosphomethylpyrimidine synthase (619 aa).

Residues 93 to 104 (IKPEDNGLKGPD) are compositionally biased toward basic and acidic residues. Residues 93-114 (IKPEDNGLKGPDRSGGVTPFPN) are disordered. Substrate is bound by residues asparagine 217, methionine 246, tyrosine 275, histidine 311, 331-333 (SRG), 372-375 (DGLR), and glutamate 411. Zn(2+) is bound at residue histidine 415. Tyrosine 438 contacts substrate. Histidine 479 lines the Zn(2+) pocket. 3 residues coordinate [4Fe-4S] cluster: cysteine 559, cysteine 562, and cysteine 567.

The protein belongs to the ThiC family. In terms of assembly, homodimer. It depends on [4Fe-4S] cluster as a cofactor.

It catalyses the reaction 5-amino-1-(5-phospho-beta-D-ribosyl)imidazole + S-adenosyl-L-methionine = 4-amino-2-methyl-5-(phosphooxymethyl)pyrimidine + CO + 5'-deoxyadenosine + formate + L-methionine + 3 H(+). It participates in cofactor biosynthesis; thiamine diphosphate biosynthesis. Functionally, catalyzes the synthesis of the hydroxymethylpyrimidine phosphate (HMP-P) moiety of thiamine from aminoimidazole ribotide (AIR) in a radical S-adenosyl-L-methionine (SAM)-dependent reaction. This chain is Phosphomethylpyrimidine synthase, found in Rhizorhabdus wittichii (strain DSM 6014 / CCUG 31198 / JCM 15750 / NBRC 105917 / EY 4224 / RW1) (Sphingomonas wittichii).